The following is a 1005-amino-acid chain: Beta/gamma crystallin domain-containing protein 3 (1005 aa).

Residues S122, S129, S130, S136, and S140 each carry the phosphoserine modification. Disordered regions lie at residues 132 to 159 and 173 to 198; these read EDVL…PSSV and NFDG…DWRT. Residues 180–189 show a composition bias toward acidic residues; that stretch reads QEAEEEEEEA. Beta/gamma crystallin 'Greek key' domains are found at residues 367–416, 462–500, 512–556, 557–599, 605–647, 648–690, 701–737, 738–781, and 828–869; these read GCWI…KRVL, GVWL…HPLQ, LKVI…RVIG, GVWV…RYLQ, SSIT…HVKS, GVWV…RPIQ, HLLK…KVLR, GCWL…QPID, and GLWI…RPMK. In terms of domain architecture, Ricin B-type lectin spans 871–1003; it reads PAVYIRIRNR…GEETQKWDIE (133 aa).

It belongs to the beta/gamma-crystallin family.

The chain is Beta/gamma crystallin domain-containing protein 3 (Crybg3) from Mus musculus (Mouse).